A 94-amino-acid chain; its full sequence is Na(+)/H(+) antiporter subunit F (94 aa).

The next 3 helical transmembrane spans lie at 2-22 (FTLILQIALGIMAVSTFLYVI), 34-54 (VVALDAIGINLIAITALVSIL), and 59-79 (AFLDIILLLGILSFIGTIAFS).

Belongs to the CPA3 antiporters (TC 2.A.63) subunit F family. Forms a heterooligomeric complex that consists of seven subunits: MrpA, MrpB, MrpC, MrpD, MrpE, MrpF and MrpG.

Its subcellular location is the cell membrane. Its function is as follows. Mrp complex is a Na(+)/H(+) antiporter that is considered to be the major Na(+) excretion system in B.subtilis. Has a major role in Na(+) resistance and a minor role in Na(+)- and K(+)-dependent pH homeostasis as compared to TetB. MrpA may be the actual Na(+)/H(+) antiporter, although the six other Mrp proteins are all required for Na(+)/H(+) antiport activity and Na(+) resistance. MrpA is required for initiation of sporulation when external Na(+) concentration increases. Also transports Li(+) but not K(+), Ca(2+) or Mg(2+). Involved in cholate and Na(+) efflux activities, which may be mechanistically coupled. Does not require other Mrp proteins for its own function. This chain is Na(+)/H(+) antiporter subunit F (mrpF), found in Bacillus subtilis (strain 168).